A 166-amino-acid polypeptide reads, in one-letter code: Ribonuclease H (166 aa).

One can recognise an RNase H type-1 domain in the interval 10 to 151 (KRVRVDMFTD…ADELARRGTS (142 aa)). Residues aspartate 19, glutamate 57, aspartate 79, and aspartate 143 each coordinate Mg(2+). Residues 145-157 (LARRGTSEARQGK) show a composition bias toward basic and acidic residues. The interval 145–166 (LARRGTSEARQGKVDGQSSTIL) is disordered.

Belongs to the RNase H family. As to quaternary structure, monomer. Mg(2+) is required as a cofactor.

It is found in the cytoplasm. The enzyme catalyses Endonucleolytic cleavage to 5'-phosphomonoester.. Endonuclease that specifically degrades the RNA of RNA-DNA hybrids. The polypeptide is Ribonuclease H (Rhodospirillum rubrum (strain ATCC 11170 / ATH 1.1.1 / DSM 467 / LMG 4362 / NCIMB 8255 / S1)).